A 105-amino-acid chain; its full sequence is Heat shock protein HspQ (105 aa).

The tract at residues 76-105 (EMRDEHPEQPSMDELARTIRKQLQAPRLRN) is disordered.

The protein belongs to the HspQ family.

It is found in the cytoplasm. Involved in the degradation of certain denaturated proteins, including DnaA, during heat shock stress. The chain is Heat shock protein HspQ from Salmonella agona (strain SL483).